Reading from the N-terminus, the 256-residue chain is Hydroxyacylglutathione hydrolase (256 aa).

H57, H59, D61, H62, H115, D134, and H172 together coordinate Zn(2+).

Belongs to the metallo-beta-lactamase superfamily. Glyoxalase II family. In terms of assembly, monomer. Requires Zn(2+) as cofactor.

The catalysed reaction is an S-(2-hydroxyacyl)glutathione + H2O = a 2-hydroxy carboxylate + glutathione + H(+). It participates in secondary metabolite metabolism; methylglyoxal degradation; (R)-lactate from methylglyoxal: step 2/2. Thiolesterase that catalyzes the hydrolysis of S-D-lactoyl-glutathione to form glutathione and D-lactic acid. The protein is Hydroxyacylglutathione hydrolase of Rhodospirillum rubrum (strain ATCC 11170 / ATH 1.1.1 / DSM 467 / LMG 4362 / NCIMB 8255 / S1).